Consider the following 235-residue polypeptide: Putative cobalt transport protein CbiM 2 (235 aa).

A run of 7 helical transmembrane segments spans residues 8-28 (LPAI…AYGV), 40-60 (GILP…SLKM), 74-94 (GIGA…IVLI), 107-127 (TLGA…YLIY), 135-155 (LNFY…TYIV), 160-180 (LALA…SSFS), and 185-205 (IFAI…ALLF).

The protein belongs to the CbiM family. Forms an energy-coupling factor (ECF) transporter complex composed of an ATP-binding protein (A component, CbiO), a transmembrane protein (T component, CbiQ) and 2 possible substrate-capture proteins (S components, CbiM and CbiN) of unknown stoichimetry.

It localises to the cell membrane. It functions in the pathway cofactor biosynthesis; adenosylcobalamin biosynthesis. Functionally, part of the energy-coupling factor (ECF) transporter complex CbiMNOQ involved in cobalt import. The polypeptide is Putative cobalt transport protein CbiM 2 (Methanosarcina barkeri (strain Fusaro / DSM 804)).